The sequence spans 156 residues: Ribosomal RNA large subunit methyltransferase H (156 aa).

Residues Leu-73, Gly-104, and 123-128 each bind S-adenosyl-L-methionine; that span reads LSSLTL.

Belongs to the RNA methyltransferase RlmH family. As to quaternary structure, homodimer.

The protein resides in the cytoplasm. It carries out the reaction pseudouridine(1915) in 23S rRNA + S-adenosyl-L-methionine = N(3)-methylpseudouridine(1915) in 23S rRNA + S-adenosyl-L-homocysteine + H(+). Specifically methylates the pseudouridine at position 1915 (m3Psi1915) in 23S rRNA. The sequence is that of Ribosomal RNA large subunit methyltransferase H from Bordetella petrii (strain ATCC BAA-461 / DSM 12804 / CCUG 43448).